The following is a 435-amino-acid chain: MNQIRQAPAASASNATESKQEIRNYTMNFGPQHPAAHGVLRLILEMDGETVVRADPHIGLLHRGTEKLAESKPFNQSIGYMDRLDYVSMMCNEHAYVRAIETLIGIQAPERAQYIRTMFDEITRILNHLMWLGSNALDLGAMAVMLYAFREREELMDVYEAISGARMHAAYYRPGGVYRDLPDTMPKYKESRWHKGKALKRLNAAREGSMLDFLEHFTDTFPQRIDEYETLLTDNRIWKQRTVGVGVIEPDVAKAWGMTGVMLRGSGIAWDLRKKQPYAKYDAVDFDIPLGTCGDCYDRYLCRVAEMRESNRIIKQCVQWLKMNPGQVMVENCKVAPPKRESMKDDMEALIHHFKLFSEGYCVPAGETYSAVEAPKGEFGCYLISDGANKPFRVHLRAPGFAHLSSMDAVVRGYMLADVVAMIGTYDLVFGEVDR.

The protein belongs to the complex I 49 kDa subunit family. As to quaternary structure, NDH-1 is composed of 14 different subunits. Subunits NuoB, C, D, E, F, and G constitute the peripheral sector of the complex.

The protein resides in the cell inner membrane. It carries out the reaction a quinone + NADH + 5 H(+)(in) = a quinol + NAD(+) + 4 H(+)(out). Its function is as follows. NDH-1 shuttles electrons from NADH, via FMN and iron-sulfur (Fe-S) centers, to quinones in the respiratory chain. The immediate electron acceptor for the enzyme in this species is believed to be ubiquinone. Couples the redox reaction to proton translocation (for every two electrons transferred, four hydrogen ions are translocated across the cytoplasmic membrane), and thus conserves the redox energy in a proton gradient. This Xylella fastidiosa (strain M23) protein is NADH-quinone oxidoreductase subunit D.